Consider the following 286-residue polypeptide: Transcription factor MafA (286 aa).

Ser-14 and Ser-49 each carry phosphoserine. Positions 51-85 (SSTPLSTPCSSVPSSPSFCAPSPGGQPSAGPTAAP) are enriched in low complexity. The interval 51 to 87 (SSTPLSTPCSSVPSSPSFCAPSPGGQPSAGPTAAPLG) is disordered. Residues Thr-53 and Thr-57 each carry the phosphothreonine modification. Residues Ser-61 and Ser-65 each carry the phosphoserine modification. At Thr-113 the chain carries Phosphothreonine. The interval 126–167 (HHHHHHHQSYESFRPQPFGGEELPPAAHHHNAHHHHHHHHLR) is disordered. A compositionally biased stretch (basic residues) spans 152–166 (AHHHNAHHHHHHHHL). Positions 199–224 (RLKQNRRTLKNRGYAQSCRYKRVQQR) are basic motif. Residues 199-262 (RLKQNRRTLK…DLYKEKYEKL (64 aa)) form the bZIP domain. The tract at residues 227-248 (LENEKCQLQSQVEQLKQEVSRL) is leucine-zipper. Residues 265–286 (RGFPREPSPPAAPKTTAADFFM) form a disordered region. Ser-272 carries the phosphoserine modification. Positions 277-286 (PKTTAADFFM) are enriched in low complexity.

This sequence belongs to the bZIP family. Maf subfamily. Forms homodimers or heterodimers. May interact (via leucine-zipper domain) with MAFB. May interact with FOS and JUN. Interacts with PCAF; this interaction impairs MAFA ubiquitination.

The protein localises to the nucleus. Functionally, transcription factor involved in transcription regulation during lens development, including that of crystallin and filensin/BFSP1 genes. Binds to CRE-type MARE 5'-TGCTGACGTCAGCA-3' and TRE-type MARE 5'-TGCTGACTCAGCA-3' DNA sequences. The chain is Transcription factor MafA (MAFA) from Gallus gallus (Chicken).